A 125-amino-acid polypeptide reads, in one-letter code: Glycine cleavage system H protein (125 aa).

Positions 19-101 (EVTVGITDHA…YHEGWLVKLK (83 aa)) constitute a Lipoyl-binding domain. At Lys60 the chain carries N6-lipoyllysine.

This sequence belongs to the GcvH family. In terms of assembly, the glycine cleavage system is composed of four proteins: P, T, L and H. (R)-lipoate is required as a cofactor.

Functionally, the glycine cleavage system catalyzes the degradation of glycine. The H protein shuttles the methylamine group of glycine from the P protein to the T protein. The protein is Glycine cleavage system H protein of Legionella pneumophila (strain Corby).